The following is a 124-amino-acid chain: Outer dense fiber protein 2 (124 aa).

The stretch at 13-124 (KEDSERLMEQ…EAIMEQLKEL (112 aa)) forms a coiled coil.

The protein belongs to the ODF2 family. As to quaternary structure, self-associates. Associates with microtubules and forms a fibrillar structure partially linked to the microtubule network. Interacts through its C-terminus with PLK1. Interacts with ODF1. Interacts with MARK4; the interaction is required for localization of ODF2 to centrioles. Interacts with TSSK4. Interacts with AKNA. Interacts with QRICH2. Interacts with CFAP58. Interacts with BBOF1. Interacts with CCDC38. Interacts with CCDC42. In terms of processing, tyrosine phosphorylated. Detected in sperm flagella (at protein level).

The protein resides in the cytoplasm. It localises to the cytoskeleton. It is found in the microtubule organizing center. Its subcellular location is the centrosome. The protein localises to the cell projection. The protein resides in the cilium. It localises to the centriole. It is found in the spindle pole. Its subcellular location is the flagellum. Functionally, seems to be a major component of sperm tail outer dense fibers (ODF). ODFs are filamentous structures located on the outside of the axoneme in the midpiece and principal piece of the mammalian sperm tail and may help to maintain the passive elastic structures and elastic recoil of the sperm tail. May have a modulating influence on sperm motility. Functions as a general scaffold protein that is specifically localized at the distal/subdistal appendages of mother centrioles. Component of the centrosome matrix required for the localization of PLK1 and NIN to the centrosomes. Required for the formation and/or maintenance of normal CETN1 assembly. In Mesocricetus auratus (Golden hamster), this protein is Outer dense fiber protein 2.